A 164-amino-acid chain; its full sequence is UPF0304 protein CKO_00501 (164 aa).

This sequence belongs to the UPF0304 family.

In Citrobacter koseri (strain ATCC BAA-895 / CDC 4225-83 / SGSC4696), this protein is UPF0304 protein CKO_00501.